Consider the following 250-residue polypeptide: NAD-dependent protein deacylase 1 (250 aa).

Residues 1 to 250 (MRAVVELLAG…PELLRRAFPG (250 aa)) enclose the Deacetylase sirtuin-type domain. NAD(+) is bound at residue 19–39 (GAGVSAESGIPTFRDALGGLW). Residues Tyr-64 and Arg-67 each coordinate substrate. 98-101 (QNVD) is a binding site for NAD(+). His-116 functions as the Proton acceptor in the catalytic mechanism. Residues Cys-124, Cys-127, Cys-152, and Cys-155 each coordinate Zn(2+). Residues 192–194 (GTS), 218–220 (NPQ), and Ala-236 each bind NAD(+).

The protein belongs to the sirtuin family. Class III subfamily. Requires Zn(2+) as cofactor.

The protein resides in the cytoplasm. It catalyses the reaction N(6)-acetyl-L-lysyl-[protein] + NAD(+) + H2O = 2''-O-acetyl-ADP-D-ribose + nicotinamide + L-lysyl-[protein]. The enzyme catalyses N(6)-succinyl-L-lysyl-[protein] + NAD(+) + H2O = 2''-O-succinyl-ADP-D-ribose + nicotinamide + L-lysyl-[protein]. Functionally, NAD-dependent lysine deacetylase and desuccinylase that specifically removes acetyl and succinyl groups on target proteins. Modulates the activities of several proteins which are inactive in their acylated form. The sequence is that of NAD-dependent protein deacylase 1 from Pseudomonas aeruginosa (strain ATCC 15692 / DSM 22644 / CIP 104116 / JCM 14847 / LMG 12228 / 1C / PRS 101 / PAO1).